The sequence spans 603 residues: DNA ligase (603 aa).

Glu-262 provides a ligand contact to ATP. Lys-264 serves as the catalytic N6-AMP-lysine intermediate. 6 residues coordinate ATP: Arg-269, Arg-285, Glu-315, Phe-355, Arg-432, and Lys-438.

It belongs to the ATP-dependent DNA ligase family. Requires Mg(2+) as cofactor.

It catalyses the reaction ATP + (deoxyribonucleotide)n-3'-hydroxyl + 5'-phospho-(deoxyribonucleotide)m = (deoxyribonucleotide)n+m + AMP + diphosphate.. Its function is as follows. DNA ligase that seals nicks in double-stranded DNA during DNA replication, DNA recombination and DNA repair. In Caldivirga maquilingensis (strain ATCC 700844 / DSM 13496 / JCM 10307 / IC-167), this protein is DNA ligase.